Here is a 75-residue protein sequence, read N- to C-terminus: Gas vesicle protein S (75 aa).

It belongs to the gas vesicle GvpA family.

It localises to the gas vesicle. In terms of biological role, probably a minor component of the gas vesicle. Gas vesicles are hollow, gas filled proteinaceous nanostructures found in some microorganisms. It is not clear what function gas vesicles perform in soil bacteria. The protein is Gas vesicle protein S of Streptomyces sp. (strain CB03234).